Consider the following 256-residue polypeptide: Isoprenyl transferase (256 aa).

The active site involves Asp33. A Mg(2+)-binding site is contributed by Asp33. Substrate is bound by residues 34–37, Trp38, Arg46, His50, and 78–80; these read GNGR and STE. Asn81 (proton acceptor) is an active-site residue. Substrate contacts are provided by residues Trp82, Arg84, Arg201, and 207 to 209; that span reads RIS. Residue Glu220 coordinates Mg(2+).

This sequence belongs to the UPP synthase family. Homodimer. Requires Mg(2+) as cofactor.

Functionally, catalyzes the condensation of isopentenyl diphosphate (IPP) with allylic pyrophosphates generating different type of terpenoids. This is Isoprenyl transferase from Staphylococcus aureus (strain COL).